The following is a 118-amino-acid chain: Large ribosomal subunit protein bL20c (118 aa).

Belongs to the bacterial ribosomal protein bL20 family.

It localises to the plastid. In terms of biological role, binds directly to 23S ribosomal RNA and is necessary for the in vitro assembly process of the 50S ribosomal subunit. It is not involved in the protein synthesizing functions of that subunit. The chain is Large ribosomal subunit protein bL20c (rpl20) from Cuscuta reflexa (Southern Asian dodder).